Reading from the N-terminus, the 460-residue chain is Biphenyl 2,3-dioxygenase subunit alpha (460 aa).

A Rieske domain is found at 56–165; sequence WLLMGHETQI…VETYKGLIFA (110 aa). Positions 98, 100, 118, and 121 each coordinate [2Fe-2S] cluster. 217-230 is a substrate binding site; that stretch reads QFCSDMYHAGTTSH. Residues histidine 224, histidine 230, and aspartate 378 each contribute to the Fe cation site.

This sequence belongs to the bacterial ring-hydroxylating dioxygenase alpha subunit family. In terms of assembly, heterohexamer consisting of three BphA1 subunits and three BphA2 subunits. The multicomponent biphenyl dioxygenase system is composed of a ferredoxin reductase (BphA4), a ferredoxin (BphA3), and a terminal oxygenase (BphA1A2). [2Fe-2S] cluster is required as a cofactor. The cofactor is Fe cation.

The enzyme catalyses biphenyl + NADH + O2 + H(+) = (2R,3S)-3-phenylcyclohexa-3,5-diene-1,2-diol + NAD(+). It participates in xenobiotic degradation; biphenyl degradation; 2-hydroxy-2,4-pentadienoate and benzoate from biphenyl: step 1/4. In terms of biological role, part of the oxygenase component of the biphenyl dioxygenase system that catalyzes the stereospecific dihydroxylation of the aromatic ring of biphenyl, yielding a dihydrodiol compound. Is essential for biphenyl degradation and growth of Rhodococcus sp. strain RHA1 on biphenyl as the sole source of carbon and energy. Can also use naphtalene and 4-chlorobiphenyl (4-CB) as substrates, as well as some polychlorinated biphenyls (PCB) such as 2,2'-dichlorobiphenyl, 2,3-dichlorobiphenyl and 2,5,2'-trichlorobiphenyl. Exhibits weak activity toward dibenzofuran and dibenzo-p-dioxin. Electrons are transferred from NADH to the [2Fe-2S] cluster in BphA1 via FAD of BphA4 and [2Fe-2S] cluster of BphA3. The chain is Biphenyl 2,3-dioxygenase subunit alpha from Rhodococcus jostii (strain RHA1).